We begin with the raw amino-acid sequence, 241 residues long: tRNA (guanine-N(7)-)-methyltransferase B (241 aa).

S-adenosyl-L-methionine contacts are provided by Gly-61, Glu-84, Arg-86, Asn-117, Ala-118, and Leu-137. Residue Asp-140 is part of the active site. Positions 141–149 (PHFKKTKHK) are alphaC helix. S-adenosyl-L-methionine is bound by residues Thr-215 and Glu-217. The interval 215 to 223 (TEEGKKVQR) is alpha6 helix.

The protein belongs to the class I-like SAM-binding methyltransferase superfamily. TrmB family. Catalytic component of the METTL1-WDR4 complex, composed of mettl1 and wdr4.

It localises to the nucleus. The enzyme catalyses guanosine(46) in tRNA + S-adenosyl-L-methionine = N(7)-methylguanosine(46) in tRNA + S-adenosyl-L-homocysteine. It catalyses the reaction a guanosine in mRNA + S-adenosyl-L-methionine = an N(7)-methylguanosine in mRNA + S-adenosyl-L-homocysteine. The catalysed reaction is a guanosine in miRNA + S-adenosyl-L-methionine = an N(7)-methylguanosine in miRNA + S-adenosyl-L-homocysteine. It functions in the pathway tRNA modification; N(7)-methylguanine-tRNA biosynthesis. Catalytic component of METTL1-WDR4 methyltransferase complex that mediates the formation of N(7)-methylguanine in a subset of RNA species, such as tRNAs, mRNAs and microRNAs (miRNAs). Catalyzes the formation of N(7)-methylguanine at position 46 (m7G46) in a large subset of tRNAs that contain the 5'-RAGGU-3' motif within the variable loop. M7G46 interacts with C13-G22 in the D-loop to stabilize tRNA tertiary structure and protect tRNAs from decay. Also acts as a methyltransferase for a subset of internal N(7)-methylguanine in mRNAs. Internal N(7)-methylguanine methylation of mRNAs in response to stress promotes their relocalization to stress granules, thereby suppressing their translation. Also methylates a specific subset of miRNAs. The polypeptide is tRNA (guanine-N(7)-)-methyltransferase B (mettl1-B) (Xenopus tropicalis (Western clawed frog)).